Reading from the N-terminus, the 2234-residue chain is RNA-directed RNA polymerase L (2234 aa).

Residues 26–283 are endonuclease; sequence ITVVTSQTEM…INLSDEKLSC (258 aa). Mn(2+)-binding residues include Glu51, Asp89, and Glu102. Lys115 is a catalytic residue. The span at 879–891 shows a compositional bias: basic and acidic residues; it reads KRDDHMKDSEDSK. 2 disordered regions span residues 879-898 and 927-949; these read KRDD…SSDL and KLKE…QQKR. Over residues 935-945 the composition is skewed to polar residues; sequence RQSSSGSSLKN. Positions 1184–1383 constitute a RdRp catalytic domain; it reads MEMKMSVNLG…FISSKFNKFV (200 aa). Asp1342 contacts Mg(2+).

Belongs to the Bunyavirales RNA polymerase family. As to quaternary structure, homomultimer; the oligomeric structure is essential for the polymerase activity. Interacts with nucleoprotein N. Interacts with protein Z; this interaction inhibits viral transcription and replication, Z partially blocks the product exit tunnel for the releasing nascent RNA product. The cofactor is Mn(2+). Mg(2+) is required as a cofactor.

The protein localises to the virion. It is found in the host cytoplasm. The catalysed reaction is RNA(n) + a ribonucleoside 5'-triphosphate = RNA(n+1) + diphosphate. RNA-dependent RNA polymerase, which is responsible for the replication and transcription of the viral RNA genome using antigenomic RNA as an intermediate. During transcription, synthesizes subgenomic RNAs and assures their capping by a cap-snatching mechanism, which involves the endonuclease activity cleaving the host capped pre-mRNAs. These short capped RNAs are then used as primers for viral transcription. The 3'-end of subgenomic mRNAs molecules are heterogeneous and not polyadenylated. The replicase function is to direct synthesis of antigenomic and genomic RNA which are encapsidated and non capped. As a consequence of the use of the same enzyme for both transcription and replication, these mechanisms need to be well coordinated. These processes may be regulated by proteins N and Z in a dose-dependent manner. Z protein inhibits the viral polymerase L und thus the viral transcription and RNA synthesis. This chain is RNA-directed RNA polymerase L, found in Bolomys (OLVV).